A 546-amino-acid polypeptide reads, in one-letter code: MAAKEVKFSVDARDKMLRGVDILANAVKVTLGPKGRNVVLDKSFGAPRITKDGVTVAKEIELEDKFENMGAQMVREVASKSADAAGDGTTTATVLAQAIVREGAKSVAAGMNPMDLKRGIDLAVEAVVADLVKNSKKVTSNDEIAQVGTISANGDAEIGKFLADAMKKVGNEGVITVEEAKSLETELDVVEGMQFDRGYISPYFVTNADKMRVEMDDAYILINEKKLSSLNELLPLLEAVVQTGKPLVIVAEDVEGEALATLVVNRLRGGLKVAAVKAPGFGDRRKAMLQDIAILTGGQAISEDLGIKLENVTLNMLGRAKKVMIDKENTTIVNGAGKKADIEARVSQIKAQIEETTSDYDREKLQERLAKLAGGVAVIRVGGATEVEVKERKDRVDDAMHATRAAVEEGIVPGGGVALLRASEQLKGLRTKNDDQKTGVEIVRKALSAPARQIAINAGEDGSVIVGKILENKTYAYGFDSQTGEYVNLVTKGIIDPTKVVRTAIQNAASVAALLITTEAMVAELPKKGGAGPAMPPGGGMGGMDF.

ATP-binding positions include 30-33, Lys51, 87-91, Gly415, and Asp496; these read TLGP and DGTTT.

Belongs to the chaperonin (HSP60) family. In terms of assembly, forms a cylinder of 14 subunits composed of two heptameric rings stacked back-to-back. Interacts with the co-chaperonin GroES.

Its subcellular location is the cytoplasm. It catalyses the reaction ATP + H2O + a folded polypeptide = ADP + phosphate + an unfolded polypeptide.. Together with its co-chaperonin GroES, plays an essential role in assisting protein folding. The GroEL-GroES system forms a nano-cage that allows encapsulation of the non-native substrate proteins and provides a physical environment optimized to promote and accelerate protein folding. The chain is Chaperonin GroEL 6 from Bradyrhizobium diazoefficiens (strain JCM 10833 / BCRC 13528 / IAM 13628 / NBRC 14792 / USDA 110).